We begin with the raw amino-acid sequence, 600 residues long: Elongation factor 4 (600 aa).

Residues 5-187 (SNIRNFSIIA…ALVERIPAPT (183 aa)) enclose the tr-type G domain. GTP contacts are provided by residues 17–22 (DHGKST) and 134–137 (NKID).

This sequence belongs to the TRAFAC class translation factor GTPase superfamily. Classic translation factor GTPase family. LepA subfamily.

The protein localises to the cell inner membrane. The enzyme catalyses GTP + H2O = GDP + phosphate + H(+). In terms of biological role, required for accurate and efficient protein synthesis under certain stress conditions. May act as a fidelity factor of the translation reaction, by catalyzing a one-codon backward translocation of tRNAs on improperly translocated ribosomes. Back-translocation proceeds from a post-translocation (POST) complex to a pre-translocation (PRE) complex, thus giving elongation factor G a second chance to translocate the tRNAs correctly. Binds to ribosomes in a GTP-dependent manner. This chain is Elongation factor 4, found in Psychrobacter sp. (strain PRwf-1).